The sequence spans 307 residues: Elongation factor Ts (307 aa).

Residues 79-82 (TDFV) form an involved in Mg(2+) ion dislocation from EF-Tu region.

It belongs to the EF-Ts family.

The protein localises to the cytoplasm. Functionally, associates with the EF-Tu.GDP complex and induces the exchange of GDP to GTP. It remains bound to the aminoacyl-tRNA.EF-Tu.GTP complex up to the GTP hydrolysis stage on the ribosome. This is Elongation factor Ts from Bartonella bacilliformis (strain ATCC 35685 / KC583 / Herrer 020/F12,63).